Consider the following 810-residue polypeptide: Phenylalanine--tRNA ligase beta subunit (810 aa).

One can recognise a tRNA-binding domain in the interval K40 to A153. The 82-residue stretch at A399–P480 folds into the B5 domain. Mg(2+) contacts are provided by D458, D464, E467, and E468. Residues S714–R808 form the FDX-ACB domain.

The protein belongs to the phenylalanyl-tRNA synthetase beta subunit family. Type 1 subfamily. Tetramer of two alpha and two beta subunits. Mg(2+) serves as cofactor.

The protein resides in the cytoplasm. It catalyses the reaction tRNA(Phe) + L-phenylalanine + ATP = L-phenylalanyl-tRNA(Phe) + AMP + diphosphate + H(+). In Chlorobaculum tepidum (strain ATCC 49652 / DSM 12025 / NBRC 103806 / TLS) (Chlorobium tepidum), this protein is Phenylalanine--tRNA ligase beta subunit.